We begin with the raw amino-acid sequence, 95 residues long: YcgL domain-containing protein APJL_0712 (95 aa).

The 85-residue stretch at 4 to 88 (HLCAIYKSPK…PPENLLKTFL (85 aa)) folds into the YcgL domain.

This Actinobacillus pleuropneumoniae serotype 3 (strain JL03) protein is YcgL domain-containing protein APJL_0712.